Here is a 539-residue protein sequence, read N- to C-terminus: GMP synthase [glutamine-hydrolyzing] (539 aa).

The Glutamine amidotransferase type-1 domain maps to 4–202 (KILILDFGSQ…VLQIAGAKPD (199 aa)). Cys-81 (nucleophile) is an active-site residue. Catalysis depends on residues His-176 and Glu-178. A GMPS ATP-PPase domain is found at 203-395 (WIMSNHIEEA…LGLPPEMVYR (193 aa)). 230-236 (SGGVDSS) is an ATP binding site.

As to quaternary structure, homodimer.

The enzyme catalyses XMP + L-glutamine + ATP + H2O = GMP + L-glutamate + AMP + diphosphate + 2 H(+). The protein operates within purine metabolism; GMP biosynthesis; GMP from XMP (L-Gln route): step 1/1. In terms of biological role, catalyzes the synthesis of GMP from XMP. The sequence is that of GMP synthase [glutamine-hydrolyzing] from Burkholderia ambifaria (strain MC40-6).